The following is a 216-amino-acid chain: Thiamine-phosphate synthase (216 aa).

4-amino-2-methyl-5-(diphosphooxymethyl)pyrimidine-binding positions include 35–39 (QLRDK) and N67. D68 and D87 together coordinate Mg(2+). S106 contributes to the 4-amino-2-methyl-5-(diphosphooxymethyl)pyrimidine binding site. 132-134 (TSS) is a binding site for 2-[(2R,5Z)-2-carboxy-4-methylthiazol-5(2H)-ylidene]ethyl phosphate. K135 provides a ligand contact to 4-amino-2-methyl-5-(diphosphooxymethyl)pyrimidine. Residues G163 and 183-184 (IS) each bind 2-[(2R,5Z)-2-carboxy-4-methylthiazol-5(2H)-ylidene]ethyl phosphate.

The protein belongs to the thiamine-phosphate synthase family. The cofactor is Mg(2+).

The enzyme catalyses 2-[(2R,5Z)-2-carboxy-4-methylthiazol-5(2H)-ylidene]ethyl phosphate + 4-amino-2-methyl-5-(diphosphooxymethyl)pyrimidine + 2 H(+) = thiamine phosphate + CO2 + diphosphate. The catalysed reaction is 2-(2-carboxy-4-methylthiazol-5-yl)ethyl phosphate + 4-amino-2-methyl-5-(diphosphooxymethyl)pyrimidine + 2 H(+) = thiamine phosphate + CO2 + diphosphate. It carries out the reaction 4-methyl-5-(2-phosphooxyethyl)-thiazole + 4-amino-2-methyl-5-(diphosphooxymethyl)pyrimidine + H(+) = thiamine phosphate + diphosphate. It participates in cofactor biosynthesis; thiamine diphosphate biosynthesis; thiamine phosphate from 4-amino-2-methyl-5-diphosphomethylpyrimidine and 4-methyl-5-(2-phosphoethyl)-thiazole: step 1/1. Condenses 4-methyl-5-(beta-hydroxyethyl)thiazole monophosphate (THZ-P) and 2-methyl-4-amino-5-hydroxymethyl pyrimidine pyrophosphate (HMP-PP) to form thiamine monophosphate (TMP). The chain is Thiamine-phosphate synthase from Methanoregula boonei (strain DSM 21154 / JCM 14090 / 6A8).